The following is a 138-amino-acid chain: Large ribosomal subunit protein uL16 (138 aa).

This sequence belongs to the universal ribosomal protein uL16 family. In terms of assembly, part of the 50S ribosomal subunit.

In terms of biological role, binds 23S rRNA and is also seen to make contacts with the A and possibly P site tRNAs. In Ureaplasma parvum serovar 3 (strain ATCC 27815 / 27 / NCTC 11736), this protein is Large ribosomal subunit protein uL16.